A 443-amino-acid polypeptide reads, in one-letter code: Serine/threonine-protein phosphatase 2A 55 kDa regulatory subunit B beta isoform (443 aa).

7 WD repeats span residues 22-61, 87-128, 171-209, 220-260, 279-317, 334-375, and 410-443; these read TEAD…KNQP, EIEE…KRPE, AHTY…RSFN, ELTE…LCDR, EIIS…RPIE, ENDC…DVTL, and DFSK…DKVN.

It belongs to the phosphatase 2A regulatory subunit B family. As to quaternary structure, PP2A consists of a common heterodimeric core enzyme, composed of a 36 kDa catalytic subunit (subunit C) and a 65 kDa constant regulatory subunit (PR65 or subunit A), that associates with a variety of regulatory subunits.

The protein resides in the cytoplasm. It is found in the cytoskeleton. Its subcellular location is the membrane. Functionally, the B regulatory subunit might modulate substrate selectivity and catalytic activity, and might also direct the localization of the catalytic enzyme to a particular subcellular compartment. Negatively controls the initiation of oocyte maturation. This chain is Serine/threonine-protein phosphatase 2A 55 kDa regulatory subunit B beta isoform (ppp2r2b), found in Xenopus tropicalis (Western clawed frog).